The following is a 264-amino-acid chain: Thymidylate synthase (264 aa).

Residues R21 and 126–127 (RR) contribute to the dUMP site. Residue C146 is the Nucleophile of the active site. DUMP contacts are provided by residues 166–169 (RSAD), N177, and 207–209 (HLY). Position 169 (D169) interacts with (6R)-5,10-methylene-5,6,7,8-tetrahydrofolate. (6R)-5,10-methylene-5,6,7,8-tetrahydrofolate is bound at residue A263.

The protein belongs to the thymidylate synthase family. Bacterial-type ThyA subfamily. As to quaternary structure, homodimer.

It localises to the cytoplasm. The enzyme catalyses dUMP + (6R)-5,10-methylene-5,6,7,8-tetrahydrofolate = 7,8-dihydrofolate + dTMP. The protein operates within pyrimidine metabolism; dTTP biosynthesis. In terms of biological role, catalyzes the reductive methylation of 2'-deoxyuridine-5'-monophosphate (dUMP) to 2'-deoxythymidine-5'-monophosphate (dTMP) while utilizing 5,10-methylenetetrahydrofolate (mTHF) as the methyl donor and reductant in the reaction, yielding dihydrofolate (DHF) as a by-product. This enzymatic reaction provides an intracellular de novo source of dTMP, an essential precursor for DNA biosynthesis. The chain is Thymidylate synthase from Nitrobacter hamburgensis (strain DSM 10229 / NCIMB 13809 / X14).